A 1009-amino-acid chain; its full sequence is Protein translocase subunit SecA (1009 aa).

ATP-binding positions include Gln-86, 104–108, and Asp-497; that span reads GEGKT. Disordered stretches follow at residues 869-894 and 949-1009; these read AVPQ…GQQP and ERRP…RNAG. Composition is skewed to low complexity over residues 883–894 and 953–973; these read PVPAATAPGQQP and SGAA…AGAG. Zn(2+) is bound by residues Cys-990, Cys-992, Cys-1001, and His-1002.

The protein belongs to the SecA family. In terms of assembly, monomer and homodimer. Part of the essential Sec protein translocation apparatus which comprises SecA, SecYEG and auxiliary proteins SecDF. Other proteins may also be involved. Zn(2+) is required as a cofactor.

It is found in the cell membrane. It localises to the cytoplasm. The catalysed reaction is ATP + H2O + cellular proteinSide 1 = ADP + phosphate + cellular proteinSide 2.. Its function is as follows. Part of the Sec protein translocase complex. Interacts with the SecYEG preprotein conducting channel. Has a central role in coupling the hydrolysis of ATP to the transfer of proteins into and across the cell membrane, serving as an ATP-driven molecular motor driving the stepwise translocation of polypeptide chains across the membrane. The polypeptide is Protein translocase subunit SecA (Acidothermus cellulolyticus (strain ATCC 43068 / DSM 8971 / 11B)).